Consider the following 289-residue polypeptide: Rhodopsin (289 aa).

Over 1 to 7 (YLVSPAG) the chain is Extracellular. The helical transmembrane segment at 8 to 32 (YAALGAYMFLLILVGFPVNFLTLYV) threads the bilayer. The Cytoplasmic segment spans residues 33–44 (TLEHKKLRTPLN). A helical membrane pass occupies residues 45–67 (YILLNLAVADLFMVLGGFTTTMY). Topologically, residues 68–81 (TSMHGYFVLGRLGC) are extracellular. The cysteines at positions 81 and 158 are disulfide-linked. The chain crosses the membrane as a helical span at residues 82 to 104 (NLEGFFVTLGGEIALWSLVVLAI). Positions 105-107 (ERW) match the 'Ionic lock' involved in activated form stabilization motif. At 105-123 (ERWIGVFKSIRNFRFTEDH) the chain is on the cytoplasmic side. The chain crosses the membrane as a helical span at residues 124–144 (AIMGLGFSWVMAATCAVPPLV). Topologically, residues 145 to 173 (GWLRYIPEGMQCSCGVDYYTRAEGFNNES) are extracellular. The N-linked (GlcNAc...) asparagine glycan is linked to asparagine 171. A helical transmembrane segment spans residues 174–195 (FVIYMFIVHFLIPLIVIFFCYG). Residues 196 to 223 (RLLCAVKEAAAAQQESETTQRAEKEVSR) are Cytoplasmic-facing. A helical membrane pass occupies residues 224-245 (MVVIMVIGYLVCWLPYASVAWW). The Extracellular portion of the chain corresponds to 246 to 257 (IFCNQGSEFGPI). Residues 258–279 (FMTLPAFFAKSPAIYNPLIYIC) form a helical membrane-spanning segment. An N6-(retinylidene)lysine modification is found at lysine 267. Residues 280 to 289 (MNKQFPHCMI) are Cytoplasmic-facing.

It belongs to the G-protein coupled receptor 1 family. Opsin subfamily. In terms of processing, phosphorylated on some or all of the serine and threonine residues present in the C-terminal region. Post-translationally, contains one covalently linked retinal chromophore.

The protein resides in the membrane. Its subcellular location is the cell projection. It localises to the cilium. It is found in the photoreceptor outer segment. Functionally, photoreceptor required for image-forming vision at low light intensity. While most salt water fish species use retinal as chromophore, most freshwater fish use 3-dehydroretinal, or a mixture of retinal and 3-dehydroretinal. Light-induced isomerization of 11-cis to all-trans retinal triggers a conformational change that activates signaling via G-proteins. Subsequent receptor phosphorylation mediates displacement of the bound G-protein alpha subunit by arrestin and terminates signaling. In Leocottus kesslerii (Kessler's sculpin), this protein is Rhodopsin (rho).